A 143-amino-acid polypeptide reads, in one-letter code: MFDFDATLPLMALQFVLLAIILNAIFYKPLNKALDERADYIRQNETGGQQQLAEAKELAAKYEQQLAQARKESQDIVAQAQAEAKQLATEAVAEAQKEAIAKKEAAAQEIEQQRQEALKTLEQQVDTLSRQILEKLLGPELVK.

A helical transmembrane segment spans residues 6 to 26; sequence ATLPLMALQFVLLAIILNAIF.

Belongs to the ATPase B chain family. As to quaternary structure, F-type ATPases have 2 components, F(1) - the catalytic core - and F(0) - the membrane proton channel. F(1) has five subunits: alpha(3), beta(3), gamma(1), delta(1), epsilon(1). F(0) has four main subunits: a(1), b(1), b'(1) and c(10-14). The alpha and beta chains form an alternating ring which encloses part of the gamma chain. F(1) is attached to F(0) by a central stalk formed by the gamma and epsilon chains, while a peripheral stalk is formed by the delta, b and b' chains.

The protein resides in the cellular thylakoid membrane. In terms of biological role, f(1)F(0) ATP synthase produces ATP from ADP in the presence of a proton or sodium gradient. F-type ATPases consist of two structural domains, F(1) containing the extramembraneous catalytic core and F(0) containing the membrane proton channel, linked together by a central stalk and a peripheral stalk. During catalysis, ATP synthesis in the catalytic domain of F(1) is coupled via a rotary mechanism of the central stalk subunits to proton translocation. Functionally, component of the F(0) channel, it forms part of the peripheral stalk, linking F(1) to F(0). The b'-subunit is a diverged and duplicated form of b found in plants and photosynthetic bacteria. The polypeptide is ATP synthase subunit b' (Crocosphaera subtropica (strain ATCC 51142 / BH68) (Cyanothece sp. (strain ATCC 51142))).